Reading from the N-terminus, the 858-residue chain is Zinc finger protein ZXDC (858 aa).

Disordered stretches follow at residues 1–127 and 151–174; these read MDLP…APAG and PGPA…STPG. Low complexity-rich tracts occupy residues 23–35, 84–97, and 151–171; these read PLRR…GASP, GGAA…QEAE, and PGPA…SGPS. Phosphoserine is present on serine 34. Phosphothreonine is present on threonine 172. 10 consecutive C2H2-type zinc fingers follow at residues 175–199, 208–232, 238–262, 268–290, 297–321, 328–352, 358–382, 388–412, 418–442, and 451–476; these read YRCP…LLTH, FKCP…LQSH, FGCP…MKGH, FKCE…QRSH, YKCD…NRAH, FSCS…LRSH, FICD…RRKH, FTCP…SITH, FECP…SKKH, and SRCP…VRQH. Residues 579–688 form a required for transcriptional activation region; the sequence is DSPLVLGTAA…HGLPQSTLPS (110 aa). Lysine 660 participates in a covalent cross-link: Glycyl lysine isopeptide (Lys-Gly) (interchain with G-Cter in SUMO). 3 disordered regions span residues 660 to 696, 726 to 756, and 837 to 858; these read KVEP…HGAQ, KEKK…SPPH, and GGPA…QDLQ. Phosphoserine is present on serine 665. Residues 675 to 687 are compositionally biased toward polar residues; sequence QEGSHGLPQSTLP. Positions 781-858 are interaction with CIITA; the sequence is PAAGVQCGAQ…GSTINLQDLQ (78 aa). Over residues 847–858 the composition is skewed to polar residues; that stretch reads FPGSTINLQDLQ.

It belongs to the ZXD family. As to quaternary structure, self-associates. Interacts with ZXDA and CIITA. In terms of processing, sumoylated at Lys-660 with SUMO1, SUMO2 and SUMO3; sumoylation enhances the activity of the transcriptional activation domain. Expressed at high levels in heart, kidney, liver and testis, at moderate levels in brain and stomach, and at low levels in lung, muscle, placenta, small intestine and spleen.

Its subcellular location is the nucleus. In terms of biological role, cooperates with CIITA to promote transcription of MHC class I and MHC class II genes. The chain is Zinc finger protein ZXDC (ZXDC) from Homo sapiens (Human).